Reading from the N-terminus, the 723-residue chain is E3 ubiquitin-protein ligase LRSAM1 (723 aa).

LRR repeat units lie at residues 30-51, 56-77, 82-103, 105-127, 128-149, and 151-172; these read ADDILDISKCELSEIPFGAFAT, QKKVLIVHTNHLTSLLPKSCSL, TIKVLDLHDNQLTALPDDLGQL, ALQVLNVERNQLMQLPRSIGNLT, QLQTLNVKDNKLKELPDTVGEL, and SLRTLNISGNEIQRLPQMLAHV. Phosphoserine is present on Ser234. Coiled-coil stretches lie at residues 254 to 380 and 510 to 562; these read SDYE…TESL and ALSS…KPLS. The segment at 282 to 314 is disordered; that stretch reads TQLLQQSSSQKDEILQTVKEEQSRLEQGLSEHQ. The segment covering 291–314 has biased composition (basic and acidic residues); that stretch reads QKDEILQTVKEEQSRLEQGLSEHQ. The 64-residue stretch at 569–632 folds into the SAM domain; it reads GMERQLVALL…LRRVQELLDA (64 aa). Position 604 is a phosphoserine (Ser604). The interval 642-665 is disordered; the sequence is PMGEVVTPTAPQEPPESVRPSAPP. 2 consecutive short sequence motifs (PTAP motif) follow at residues 649 to 652 and 661 to 664; these read PTAP and PSAP. The RING-type zinc-finger motif lies at 675-710; the sequence is CVVCLEREAQMIFLNCGHVCCCQQCCQPLRTCPLCR.

Interacts with TSG101. Interacts with PHF23. Interacts with FUS. Post-translationally, ubiquitination promoted by PHF23 leads to proteasomal degradation. Highly expressed in adult spinal cord motoneurons as well as in fetal spinal cord and muscle tissue.

The protein localises to the cytoplasm. The catalysed reaction is S-ubiquitinyl-[E2 ubiquitin-conjugating enzyme]-L-cysteine + [acceptor protein]-L-lysine = [E2 ubiquitin-conjugating enzyme]-L-cysteine + N(6)-ubiquitinyl-[acceptor protein]-L-lysine.. It participates in protein modification; protein ubiquitination. In terms of biological role, E3 ubiquitin-protein ligase that mediates monoubiquitination of TSG101 at multiple sites, leading to inactivate the ability of TSG101 to sort endocytic (EGF receptors) and exocytic (HIV-1 viral proteins) cargos. Bacterial recognition protein that defends the cytoplasm from invasive pathogens. Localizes to several intracellular bacterial pathogens and generates the bacteria-associated ubiquitin signal leading to autophagy-mediated intracellular bacteria degradation (xenophagy). The chain is E3 ubiquitin-protein ligase LRSAM1 from Homo sapiens (Human).